Consider the following 720-residue polypeptide: Iron-sulfur clusters transporter ATM1, mitochondrial (720 aa).

A mitochondrion-targeting transit peptide spans methionine 1–tyrosine 36. Over isoleucine 37–arginine 129 the chain is Mitochondrial matrix. The segment covering arginine 64 to asparagine 77 has biased composition (polar residues). Residues arginine 64–threonine 102 form a disordered region. A helical transmembrane segment spans residues valine 130–phenylalanine 151. An ABC transmembrane type-1 domain is found at valine 130–glutamine 421. The Mitochondrial intermembrane segment spans residues lysine 152–threonine 175. A helical transmembrane segment spans residues methionine 176 to phenylalanine 199. Residues alanine 200–valine 248 lie on the Mitochondrial matrix side of the membrane. The helical transmembrane segment at leucine 249 to tyrosine 272 threads the bilayer. A topological domain (mitochondrial intermembrane) is located at residue glutamine 273. Residues phenylalanine 274–phenylalanine 294 form a helical membrane-spanning segment. The Mitochondrial matrix portion of the chain corresponds to lysine 295–alanine 360. Residues arginine 300–arginine 304 and asparagine 363–glutamine 366 contribute to the glutathione site. The chain crosses the membrane as a helical span at residues phenylalanine 361 to tyrosine 379. At methionine 380–aspartate 394 the chain is on the mitochondrial intermembrane side. The chain crosses the membrane as a helical span at residues leucine 395 to tyrosine 416. Glycine 413 is a glutathione binding site. At arginine 417–aspartate 720 the chain is on the mitochondrial matrix side. Residues isoleucine 456–asparagine 692 form the ABC transporter domain. ATP is bound by residues tyrosine 465 and glycine 489–arginine 500.

The protein belongs to the ABC transporter superfamily. ABCB family. Heavy Metal importer (TC 3.A.1.210) subfamily. As to quaternary structure, homodimer.

The protein resides in the mitochondrion inner membrane. Its function is as follows. Performs an essential function in the generation of cytoplasmic iron-sulfur proteins by mediating the ATP-dependent export of Fe/S cluster precursors synthesized by NFS1 and other mitochondrial proteins. Hydrolyzes ATP. Binds glutathione and may function by transporting a glutathione-conjugated iron-sulfur compound. In Kluyveromyces lactis (strain ATCC 8585 / CBS 2359 / DSM 70799 / NBRC 1267 / NRRL Y-1140 / WM37) (Yeast), this protein is Iron-sulfur clusters transporter ATM1, mitochondrial.